We begin with the raw amino-acid sequence, 570 residues long: Membrane protein insertase YidC (570 aa).

Residues glutamine 31–glutamate 60 show a composition bias toward polar residues. The tract at residues glutamine 31–serine 79 is disordered. A run of 5 helical transmembrane segments spans residues proline 230–glutamate 250, tryptophan 378–alanine 398, leucine 444–leucine 464, proline 487–proline 507, and proline 522–valine 542.

It belongs to the OXA1/ALB3/YidC family. Type 1 subfamily. In terms of assembly, interacts with the Sec translocase complex via SecD. Specifically interacts with transmembrane segments of nascent integral membrane proteins during membrane integration.

The protein localises to the cell inner membrane. In terms of biological role, required for the insertion and/or proper folding and/or complex formation of integral membrane proteins into the membrane. Involved in integration of membrane proteins that insert both dependently and independently of the Sec translocase complex, as well as at least some lipoproteins. Aids folding of multispanning membrane proteins. The chain is Membrane protein insertase YidC from Hahella chejuensis (strain KCTC 2396).